Consider the following 495-residue polypeptide: UDP-N-acetylmuramoyl-L-alanyl-D-glutamate--2,6-diaminopimelate ligase (495 aa).

Ser-29 contributes to the UDP-N-acetyl-alpha-D-muramoyl-L-alanyl-D-glutamate binding site. Position 111–117 (111–117 (GTNGKTS)) interacts with ATP. Residues 153–154 (TT), Ser-180, Gln-186, and Arg-188 contribute to the UDP-N-acetyl-alpha-D-muramoyl-L-alanyl-D-glutamate site. An N6-carboxylysine modification is found at Lys-220. Residues Arg-384, 408-411 (DNPR), Gly-459, and Glu-463 each bind meso-2,6-diaminopimelate. The short motif at 408 to 411 (DNPR) is the Meso-diaminopimelate recognition motif element.

Belongs to the MurCDEF family. MurE subfamily. Requires Mg(2+) as cofactor. In terms of processing, carboxylation is probably crucial for Mg(2+) binding and, consequently, for the gamma-phosphate positioning of ATP.

The protein resides in the cytoplasm. It catalyses the reaction UDP-N-acetyl-alpha-D-muramoyl-L-alanyl-D-glutamate + meso-2,6-diaminopimelate + ATP = UDP-N-acetyl-alpha-D-muramoyl-L-alanyl-gamma-D-glutamyl-meso-2,6-diaminopimelate + ADP + phosphate + H(+). It participates in cell wall biogenesis; peptidoglycan biosynthesis. In terms of biological role, catalyzes the addition of meso-diaminopimelic acid to the nucleotide precursor UDP-N-acetylmuramoyl-L-alanyl-D-glutamate (UMAG) in the biosynthesis of bacterial cell-wall peptidoglycan. This is UDP-N-acetylmuramoyl-L-alanyl-D-glutamate--2,6-diaminopimelate ligase from Xanthomonas campestris pv. campestris (strain 8004).